The primary structure comprises 374 residues: SKP1-interacting partner 15 (374 aa).

The F-box domain maps to 3 to 48 (SSPVNCLPPDSLHQIFSSLPIRDIMICRSVCKFFNQLLTSQCFIEI).

Part of a SCF (ASK-cullin-F-box) protein ligase complex. Interacts with SKP1A/ASK1, SKP1B/ASK2, ASK11 and ASK13.

The protein resides in the nucleus. The protein operates within protein modification; protein ubiquitination. In terms of biological role, component of SCF(ASK-cullin-F-box) E3 ubiquitin ligase complexes, which may mediate the ubiquitination and subsequent proteasomal degradation of target proteins. The chain is SKP1-interacting partner 15 (SKIP15) from Arabidopsis thaliana (Mouse-ear cress).